The sequence spans 547 residues: Sodium-coupled neutral amino acid transporter 4 (547 aa).

Residues 1–26 (MDPMELRNVNIEPDDESSSGESVPDS) are disordered. The Extracellular segment spans residues 1–104 (MDPMELRNVN…GLSYAMANTG (104 aa)). Ser49 carries the post-translational modification Phosphoserine. Residues 105-125 (IILFIIMLLAVAILSLYSVHL) traverse the membrane as a helical segment. Topologically, residues 126 to 151 (LLKTAKEGGSLIYEKLGEKAFGWPGK) are cytoplasmic. The helical transmembrane segment at 152 to 172 (IGAFISITMQNIGAMSSYLFI) threads the bilayer. Residues 173–195 (IKYELPEVIRAFMGLEENTGEWY) are Extracellular-facing. The chain crosses the membrane as a helical span at residues 196 to 216 (PNGNYLIVFVSLGIILPLSLL). Over 217 to 220 (KNLG) the chain is Cytoplasmic. The helical transmembrane segment at 221–241 (YLGYTSGFSLTCMVFFVSVVI) threads the bilayer. At 242–332 (YKKFQIPCPL…PKYFVFNSRT (91 aa)) the chain is on the extracellular side. Cys249 and Cys321 are joined by a disulfide. N-linked (GlcNAc...) asparagine glycans are attached at residues Asn260, Asn264, and Asn276. A helical transmembrane segment spans residues 333–353 (AYAIPILAFAFVCHPEVLPIY). The Cytoplasmic portion of the chain corresponds to 354 to 369 (SELKDRSRRKMQTVSN). A helical membrane pass occupies residues 370–390 (ISITGMLVMYLLAALFGYLTF). The Extracellular segment spans residues 391 to 411 (YGEVEDELLHAYSKVYTFDIP). Residues 412–432 (LLMVRLAVLVAVTLTVPIVLF) form a helical membrane-spanning segment. At 433 to 453 (PIRTSVTTLLFPKRPFSWIRH) the chain is on the cytoplasmic side. Residues 454–474 (FLIAAVLIALNNVLVILVPTI) form a helical membrane-spanning segment. At 475–476 (KY) the chain is on the extracellular side. The chain crosses the membrane as a helical span at residues 477–497 (IFGFIGASSATMLIFILPAVF). The Cytoplasmic portion of the chain corresponds to 498–514 (YLKLVKKESFRSPQKVG). The helical transmembrane segment at 515 to 535 (ALIFLVVGIIFMIGSMALIII) threads the bilayer. Topologically, residues 536–547 (DWIYDPPNSKHH) are extracellular.

This sequence belongs to the amino acid/polyamine transporter 2 family. In terms of processing, the disulfide bond plays an important role in substrate transport, but has no effect on trafficking to the cell surface.

It is found in the cell membrane. Its subcellular location is the cell projection. The protein localises to the microvillus membrane. It carries out the reaction L-methionine(in) + Na(+)(in) = L-methionine(out) + Na(+)(out). The catalysed reaction is L-asparagine(in) + Na(+)(in) = L-asparagine(out) + Na(+)(out). The enzyme catalyses L-threonine(in) + Na(+)(in) = L-threonine(out) + Na(+)(out). It catalyses the reaction L-serine(in) + Na(+)(in) = L-serine(out) + Na(+)(out). It carries out the reaction glycine(in) + Na(+)(in) = glycine(out) + Na(+)(out). The catalysed reaction is L-alanine(in) + Na(+)(in) = L-alanine(out) + Na(+)(out). The enzyme catalyses L-glutamine(in) + Na(+)(in) = L-glutamine(out) + Na(+)(out). It catalyses the reaction L-histidine(in) + Na(+)(in) = L-histidine(out) + Na(+)(out). It carries out the reaction L-cysteine(in) + Na(+)(in) = L-cysteine(out) + Na(+)(out). The catalysed reaction is L-proline(in) + Na(+)(in) = L-proline(out) + Na(+)(out). Symporter that cotransports neutral amino acids and sodium ions from the extraccellular to the intracellular side of the cell membrane. The transport is electrogenic, pH dependent and partially tolerates substitution of Na(+) by Li(+). Preferentially transports smaller amino acids, such as glycine, L-alanine, L-serine, L-asparagine and L-threonine, followed by L-cysteine, L-histidine, L-proline and L-glutamine and L-methionine. The chain is Sodium-coupled neutral amino acid transporter 4 from Pongo abelii (Sumatran orangutan).